Consider the following 219-residue polypeptide: PKHD-type hydroxylase SYNPCC7002_A2658 (219 aa).

The Fe2OG dioxygenase domain occupies 78–172; sequence TVHTLLFSRY…RLVAVGWVQS (95 aa). Fe cation contacts are provided by H96, D98, and H153. Residue R163 coordinates 2-oxoglutarate.

It depends on Fe(2+) as a cofactor. Requires L-ascorbate as cofactor.

This Picosynechococcus sp. (strain ATCC 27264 / PCC 7002 / PR-6) (Agmenellum quadruplicatum) protein is PKHD-type hydroxylase SYNPCC7002_A2658.